Here is a 212-residue protein sequence, read N- to C-terminus: Large ribosomal subunit protein uL3 (212 aa).

The tract at residues 119 to 146 is disordered; it reads YQGNIKRWGQSRGPETHGSRYHRIPGSM.

It belongs to the universal ribosomal protein uL3 family. As to quaternary structure, part of the 50S ribosomal subunit. Forms a cluster with proteins L14 and L19.

In terms of biological role, one of the primary rRNA binding proteins, it binds directly near the 3'-end of the 23S rRNA, where it nucleates assembly of the 50S subunit. This chain is Large ribosomal subunit protein uL3, found in Lactobacillus helveticus (strain DPC 4571).